Consider the following 648-residue polypeptide: Replication restart protein PriA (648 aa).

Residues 131–297 (TILNESNKPT…EIGKYQLVTL (167 aa)) enclose the Helicase ATP-binding domain. Position 144 to 151 (144 to 151 (GVTGSGKT)) interacts with ATP. Residues 240–243 (DEEH) carry the DEAH box motif. Residues Cys358, Cys361, Cys367, Cys370, Cys385, Cys388, Cys398, and Cys401 each contribute to the Zn(2+) site. Positions 393–548 (KIFSSCPECL…SFFANELEIR (156 aa)) constitute a Helicase C-terminal domain.

It belongs to the helicase family. PriA subfamily. As to quaternary structure, component of the replication restart primosome. The cofactor is Zn(2+).

The enzyme catalyses Couples ATP hydrolysis with the unwinding of duplex DNA by translocating in the 3'-5' direction.. It catalyses the reaction ATP + H2O = ADP + phosphate + H(+). Initiates the restart of stalled replication forks, which reloads the replicative helicase on sites other than the origin of replication. Recognizes and binds to abandoned replication forks and remodels them to uncover a helicase loading site. Promotes assembly of the primosome at these replication forks. The sequence is that of Replication restart protein PriA from Rickettsia conorii (strain ATCC VR-613 / Malish 7).